Here is a 292-residue protein sequence, read N- to C-terminus: AhcY transcriptional activator HvrB (292 aa).

The 58-residue stretch at 10-67 (PPLTALRAFAATASEGGFSAAARKLNVTHAAIAQQVRALEADLDVPLVWRDGKHLHLT) folds into the HTH lysR-type domain. The segment at residues 27 to 46 (FSAAARKLNVTHAAIAQQVR) is a DNA-binding region (H-T-H motif).

It belongs to the LysR transcriptional regulatory family.

Its function is as follows. Functions as a low-light activator of ahcY expression (gene for S-adenosyl-L-homocysteine hydrolase) and as a high-light activator of an uncharacterized 21.6 kDa protein in the ahcY-hvrB intergenic region (orf5). It is also a negative regulator of its own expression. The chain is AhcY transcriptional activator HvrB (hvrB) from Rhodobacter capsulatus (strain ATCC BAA-309 / NBRC 16581 / SB1003).